The chain runs to 337 residues: UPF0252 protein PH1321 (337 aa).

A helical membrane pass occupies residues 100-120 (IIGMLFLVFIILPAITSNLWS).

The protein belongs to the UPF0252 family.

It is found in the membrane. This chain is UPF0252 protein PH1321, found in Pyrococcus horikoshii (strain ATCC 700860 / DSM 12428 / JCM 9974 / NBRC 100139 / OT-3).